We begin with the raw amino-acid sequence, 161 residues long: Type II secretion system protein M (161 aa).

Over 1-16 (MNELRRRWQVMSQRER) the chain is Cytoplasmic. A helical transmembrane segment spans residues 17–37 (LMALACGGLVVLCLLYYLIWA). Residues 38–161 (PWQESVRQWQ…VTRLSLERVL (124 aa)) are Periplasmic-facing.

It belongs to the GSP M family. In terms of assembly, type II secretion system is composed of four main components: the outer membrane complex, the inner membrane complex, the cytoplasmic secretion ATPase and the periplasm-spanning pseudopilus. Forms homodimers. Interacts with OutL/GspL. Interacts with OutE/GspE and OutF/GspF.

The protein resides in the cell inner membrane. In terms of biological role, inner membrane component of the type II secretion system required for the energy-dependent secretion of extracellular factors such as proteases and toxins from the periplasm. Plays a role in the complex assembly and recruits OutL resulting in a stable complex in the inner membrane. Provides thus a link between the energy-providing OutE protein in the cytoplasm and the rest of the T2SS machinery. This chain is Type II secretion system protein M (outM), found in Dickeya chrysanthemi (Pectobacterium chrysanthemi).